The primary structure comprises 363 residues: Neutral protease 2 homolog MEP7 (363 aa).

Positions M1–S19 are cleaved as a signal peptide. A propeptide spanning residues C20 to R181 is cleaved from the precursor. Intrachain disulfides connect C187–C259 and C266–C284. Residue H308 participates in Zn(2+) binding. E309 is a catalytic residue. Residues H312 and D323 each contribute to the Zn(2+) site.

It belongs to the peptidase M35 family. The cofactor is Zn(2+).

The protein resides in the secreted. The enzyme catalyses Preferential cleavage of bonds with hydrophobic residues in P1'. Also 3-Asn-|-Gln-4 and 8-Gly-|-Ser-9 bonds in insulin B chain.. Its function is as follows. Secreted metalloproteinase that allows assimilation of proteinaceous substrates. Shows high activities on basic nuclear substrates such as histone and protamine. May be involved in virulence. The chain is Neutral protease 2 homolog MEP7 (MEP7) from Coccidioides posadasii (strain C735) (Valley fever fungus).